We begin with the raw amino-acid sequence, 117 residues long: Large ribosomal subunit protein uL18 (117 aa).

It belongs to the universal ribosomal protein uL18 family. In terms of assembly, part of the 50S ribosomal subunit; part of the 5S rRNA/L5/L18/L25 subcomplex. Contacts the 5S and 23S rRNAs.

This is one of the proteins that bind and probably mediate the attachment of the 5S RNA into the large ribosomal subunit, where it forms part of the central protuberance. This is Large ribosomal subunit protein uL18 from Onion yellows phytoplasma (strain OY-M).